Consider the following 155-residue polypeptide: Ribosome maturation factor RimP (155 aa).

It belongs to the RimP family.

The protein resides in the cytoplasm. Its function is as follows. Required for maturation of 30S ribosomal subunits. This is Ribosome maturation factor RimP from Synechococcus sp. (strain RCC307).